Here is a 146-residue protein sequence, read N- to C-terminus: Putative pre-16S rRNA nuclease (146 aa).

It belongs to the YqgF nuclease family.

It localises to the cytoplasm. Functionally, could be a nuclease involved in processing of the 5'-end of pre-16S rRNA. This is Putative pre-16S rRNA nuclease from Methylobacillus flagellatus (strain ATCC 51484 / DSM 6875 / VKM B-1610 / KT).